A 433-amino-acid polypeptide reads, in one-letter code: Enolase (433 aa).

Position 167 (Gln-167) interacts with (2R)-2-phosphoglycerate. Glu-209 acts as the Proton donor in catalysis. 3 residues coordinate Mg(2+): Asp-246, Glu-287, and Asp-314. Residues Lys-339, Arg-368, Ser-369, and Lys-390 each coordinate (2R)-2-phosphoglycerate. The active-site Proton acceptor is the Lys-339.

It belongs to the enolase family. Mg(2+) serves as cofactor.

The protein resides in the cytoplasm. Its subcellular location is the secreted. The protein localises to the cell surface. The enzyme catalyses (2R)-2-phosphoglycerate = phosphoenolpyruvate + H2O. Its pathway is carbohydrate degradation; glycolysis; pyruvate from D-glyceraldehyde 3-phosphate: step 4/5. Catalyzes the reversible conversion of 2-phosphoglycerate (2-PG) into phosphoenolpyruvate (PEP). It is essential for the degradation of carbohydrates via glycolysis. This Prochlorococcus marinus (strain NATL2A) protein is Enolase.